The chain runs to 1047 residues: Probable sucrose-phosphate synthase 2 (1047 aa).

Residues 101 to 123 (EGKNAKREAKREREREKARREVT) are compositionally biased toward basic and acidic residues. The tract at residues 101–153 (EGKNAKREAKREREREKARREVTAEMSEDFSEGEKADLPGEIPTPSDNNTKGR) is disordered. A phosphoserine mark is found at serine 127, serine 131, and serine 159. Residues 712 to 731 (KSGSNNGVDTNLDAEDRAAE) form a disordered region.

It belongs to the glycosyltransferase 1 family. In terms of assembly, homodimer or homotetramer. In terms of tissue distribution, expressed in roots, cauline leaves, flower buds, flowers and anthers. Highly expressed in maturing nectaries.

The enzyme catalyses beta-D-fructose 6-phosphate + UDP-alpha-D-glucose = sucrose 6(F)-phosphate + UDP + H(+). The protein operates within glycan biosynthesis; sucrose biosynthesis; sucrose from D-fructose 6-phosphate and UDP-alpha-D-glucose: step 1/2. With respect to regulation, activity is regulated by phosphorylation and moderated by concentration of metabolites and light. Plays a role in photosynthetic sucrose synthesis by catalyzing the rate-limiting step of sucrose biosynthesis from UDP-glucose and fructose- 6-phosphate. Involved in the regulation of carbon partitioning in the leaves of plants. May regulate the synthesis of sucrose and therefore play a major role as a limiting factor in the export of photoassimilates out of the leaf. Plays a role for sucrose availability that is essential for plant growth and fiber elongation. Required for nectar secretion. This chain is Probable sucrose-phosphate synthase 2 (SPS2), found in Arabidopsis thaliana (Mouse-ear cress).